The chain runs to 353 residues: Photosystem II protein D1 (353 aa).

At Thr-2 the chain carries N-acetylthreonine. Phosphothreonine is present on Thr-2. 3 helical membrane passes run 29–46 (YIGWFGVLMIPTLLTATS), 118–133 (HFLLGVACYMGREWEL), and 142–156 (WIAVAYSAPVAAATA). His-118 is a chlorophyll a binding site. Tyr-126 serves as a coordination point for pheophytin a. Residues Asp-170 and Glu-189 each contribute to the [CaMn4O5] cluster site. The helical transmembrane segment at 197 to 218 (FHMLGVAGVFGGSLFSAMHGSL) threads the bilayer. Residue His-198 participates in chlorophyll a binding. Residues His-215 and 264 to 265 (SF) each bind a quinone. A Fe cation-binding site is contributed by His-215. Fe cation is bound at residue His-272. The chain crosses the membrane as a helical span at residues 274–288 (FLAAWPVVGIWFTSL). Residues His-332, Glu-333, Asp-342, and Ala-344 each coordinate [CaMn4O5] cluster. Positions 345-353 (AIDAPSVNG) are excised as a propeptide.

It belongs to the reaction center PufL/M/PsbA/D family. PSII is composed of 1 copy each of membrane proteins PsbA, PsbB, PsbC, PsbD, PsbE, PsbF, PsbH, PsbI, PsbJ, PsbK, PsbL, PsbM, PsbT, PsbX, PsbY, PsbZ, Psb30/Ycf12, at least 3 peripheral proteins of the oxygen-evolving complex and a large number of cofactors. It forms dimeric complexes. The D1/D2 heterodimer binds P680, chlorophylls that are the primary electron donor of PSII, and subsequent electron acceptors. It shares a non-heme iron and each subunit binds pheophytin, quinone, additional chlorophylls, carotenoids and lipids. D1 provides most of the ligands for the Mn4-Ca-O5 cluster of the oxygen-evolving complex (OEC). There is also a Cl(-1) ion associated with D1 and D2, which is required for oxygen evolution. The PSII complex binds additional chlorophylls, carotenoids and specific lipids. is required as a cofactor. Post-translationally, tyr-161 forms a radical intermediate that is referred to as redox-active TyrZ, YZ or Y-Z. C-terminally processed by CTPA; processing is essential to allow assembly of the oxygen-evolving complex and thus photosynthetic growth.

The protein localises to the plastid. It is found in the chloroplast thylakoid membrane. The catalysed reaction is 2 a plastoquinone + 4 hnu + 2 H2O = 2 a plastoquinol + O2. Its function is as follows. Photosystem II (PSII) is a light-driven water:plastoquinone oxidoreductase that uses light energy to abstract electrons from H(2)O, generating O(2) and a proton gradient subsequently used for ATP formation. It consists of a core antenna complex that captures photons, and an electron transfer chain that converts photonic excitation into a charge separation. The D1/D2 (PsbA/PsbD) reaction center heterodimer binds P680, the primary electron donor of PSII as well as several subsequent electron acceptors. This is Photosystem II protein D1 from Coffea arabica (Arabian coffee).